The sequence spans 404 residues: Acetate kinase (404 aa).

Residue Asn-7 coordinates Mg(2+). Lys-14 lines the ATP pocket. Arg-95 contacts substrate. The active-site Proton donor/acceptor is the Asp-152. Residues 212–216, 286–288, and 334–338 contribute to the ATP site; these read HLGNG, DMR, and GIGEN. Position 388 (Glu-388) interacts with Mg(2+).

The protein belongs to the acetokinase family. As to quaternary structure, homodimer. The cofactor is Mg(2+). Requires Mn(2+) as cofactor.

It localises to the cytoplasm. The enzyme catalyses acetate + ATP = acetyl phosphate + ADP. It participates in metabolic intermediate biosynthesis; acetyl-CoA biosynthesis; acetyl-CoA from acetate: step 1/2. In terms of biological role, catalyzes the formation of acetyl phosphate from acetate and ATP. Can also catalyze the reverse reaction. This is Acetate kinase from Nitratidesulfovibrio vulgaris (strain DSM 19637 / Miyazaki F) (Desulfovibrio vulgaris).